A 337-amino-acid polypeptide reads, in one-letter code: Probable deoxyhypusine synthase (337 aa).

Lys-308 acts as the Nucleophile in catalysis.

It belongs to the deoxyhypusine synthase family. It depends on NAD(+) as a cofactor.

The catalysed reaction is [eIF5A protein]-L-lysine + spermidine = [eIF5A protein]-deoxyhypusine + propane-1,3-diamine. It functions in the pathway protein modification; eIF5A hypusination. Functionally, catalyzes the NAD-dependent oxidative cleavage of spermidine and the subsequent transfer of the butylamine moiety of spermidine to the epsilon-amino group of a specific lysine residue of the eIF-5A precursor protein to form the intermediate deoxyhypusine residue. The protein is Probable deoxyhypusine synthase of Thermococcus kodakarensis (strain ATCC BAA-918 / JCM 12380 / KOD1) (Pyrococcus kodakaraensis (strain KOD1)).